A 216-amino-acid chain; its full sequence is MAGYRADEEYDYLFKLVLIGDSGVGKSNLLSRFTKNEFNLESKSTIGVEFATKTTKVEGKVVKAQIWDTAGQERYRAITSAYYRGAVGALLIYDVTRHATFENAARWLRELRGHTDPNIVVMLIGNKCDLRHLVAVKTEEAKAFAERESLYFMETSALDATNVENAFTEVLTQIHKIVSKRSVDGGGESADLPGKGETINVKEDGSVLKRMGCCSN.

A GTP-binding site is contributed by 20 to 27; the sequence is GDSGVGKS. Residues 42 to 50 carry the Effector region motif; that stretch reads SKSTIGVEF. GTP-binding positions include 68-72, 126-129, and 156-157; these read DTAGQ, NKCD, and SA. 2 S-geranylgeranyl cysteine lipidation sites follow: C213 and C214.

Belongs to the small GTPase superfamily. Rab family.

It localises to the cell membrane. Involved in auxin-mediated response. May be involved in vesicle trafficking of components involved in polar auxin transport. Binds GTP and GDP and possesses intrinsic GTPase activity. This Arabidopsis thaliana (Mouse-ear cress) protein is Ras-related protein RABA1a (RABA1A).